Consider the following 150-residue polypeptide: Protein-export protein SecB (150 aa).

It belongs to the SecB family. As to quaternary structure, homotetramer, a dimer of dimers. One homotetramer interacts with 1 SecA dimer.

The protein localises to the cytoplasm. Its function is as follows. One of the proteins required for the normal export of preproteins out of the cell cytoplasm. It is a molecular chaperone that binds to a subset of precursor proteins, maintaining them in a translocation-competent state. It also specifically binds to its receptor SecA. In Acidovorax ebreus (strain TPSY) (Diaphorobacter sp. (strain TPSY)), this protein is Protein-export protein SecB.